Reading from the N-terminus, the 442-residue chain is Probable carboxypeptidase PADG_04062 (442 aa).

An N-terminal signal peptide occupies residues M1–A20. An N-linked (GlcNAc...) asparagine glycan is attached at N102. D160 is a binding site for Zn(2+). The active-site Proton acceptor is the E192. Residue E193 participates in Zn(2+) binding. N343 is a glycosylation site (N-linked (GlcNAc...) asparagine).

Belongs to the peptidase M20A family. The cofactor is Zn(2+).

It is found in the secreted. This is Probable carboxypeptidase PADG_04062 from Paracoccidioides brasiliensis (strain Pb18).